The following is a 187-amino-acid chain: Small ribosomal subunit protein uS5 (187 aa).

The tract at residues 1 to 20 (MAERENRRDRRDDRSREETP) is disordered. The S5 DRBM domain occupies 22 to 85 (FADRLVAINR…EQAKRQMIRV (64 aa)). The tract at residues 154 to 174 (DGLKRESSPRQVAQRRGKKVA) is disordered.

It belongs to the universal ribosomal protein uS5 family. In terms of assembly, part of the 30S ribosomal subunit. Contacts proteins S4 and S8.

Its function is as follows. With S4 and S12 plays an important role in translational accuracy. Functionally, located at the back of the 30S subunit body where it stabilizes the conformation of the head with respect to the body. The chain is Small ribosomal subunit protein uS5 from Cereibacter sphaeroides (strain ATCC 17025 / ATH 2.4.3) (Rhodobacter sphaeroides).